The primary structure comprises 549 residues: Probable acyl-activating enzyme 10 (549 aa).

The protein belongs to the ATP-dependent AMP-binding enzyme family. Expressed at low levels in roots.

In terms of biological role, may act as an acid--thiol ligase that activates carboxylic acids by forming acyl-CoAs. This Arabidopsis thaliana (Mouse-ear cress) protein is Probable acyl-activating enzyme 10 (AEE10).